A 461-amino-acid polypeptide reads, in one-letter code: Bifunctional protein GlmU (461 aa).

The pyrophosphorylase stretch occupies residues 1-229 (MNKYVVILAA…FSESLGVNDR (229 aa)). Residues 8 to 11 (LAAG), Lys22, Gln72, and 77 to 78 (GT) each bind UDP-N-acetyl-alpha-D-glucosamine. Asp102 serves as a coordination point for Mg(2+). Positions 139, 154, 169, and 227 each coordinate UDP-N-acetyl-alpha-D-glucosamine. A Mg(2+)-binding site is contributed by Asn227. The segment at 230–250 (IALAQATKIMQRRINEEHMRN) is linker. Residues 251-461 (GVSFIDPDTA…LPLAKDKEWE (211 aa)) form an N-acetyltransferase region. Positions 332 and 350 each coordinate UDP-N-acetyl-alpha-D-glucosamine. The active-site Proton acceptor is the His362. Positions 365 and 376 each coordinate UDP-N-acetyl-alpha-D-glucosamine. Acetyl-CoA is bound by residues 385–386 (NY), Ala422, and Arg439.

It in the N-terminal section; belongs to the N-acetylglucosamine-1-phosphate uridyltransferase family. In the C-terminal section; belongs to the transferase hexapeptide repeat family. Homotrimer. Mg(2+) serves as cofactor.

The protein resides in the cytoplasm. It carries out the reaction alpha-D-glucosamine 1-phosphate + acetyl-CoA = N-acetyl-alpha-D-glucosamine 1-phosphate + CoA + H(+). It catalyses the reaction N-acetyl-alpha-D-glucosamine 1-phosphate + UTP + H(+) = UDP-N-acetyl-alpha-D-glucosamine + diphosphate. The protein operates within nucleotide-sugar biosynthesis; UDP-N-acetyl-alpha-D-glucosamine biosynthesis; N-acetyl-alpha-D-glucosamine 1-phosphate from alpha-D-glucosamine 6-phosphate (route II): step 2/2. It participates in nucleotide-sugar biosynthesis; UDP-N-acetyl-alpha-D-glucosamine biosynthesis; UDP-N-acetyl-alpha-D-glucosamine from N-acetyl-alpha-D-glucosamine 1-phosphate: step 1/1. Its pathway is bacterial outer membrane biogenesis; LPS lipid A biosynthesis. Functionally, catalyzes the last two sequential reactions in the de novo biosynthetic pathway for UDP-N-acetylglucosamine (UDP-GlcNAc). The C-terminal domain catalyzes the transfer of acetyl group from acetyl coenzyme A to glucosamine-1-phosphate (GlcN-1-P) to produce N-acetylglucosamine-1-phosphate (GlcNAc-1-P), which is converted into UDP-GlcNAc by the transfer of uridine 5-monophosphate (from uridine 5-triphosphate), a reaction catalyzed by the N-terminal domain. The chain is Bifunctional protein GlmU from Lactobacillus johnsonii (strain CNCM I-12250 / La1 / NCC 533).